A 595-amino-acid polypeptide reads, in one-letter code: DNA mismatch repair protein MutL (595 aa).

The protein belongs to the DNA mismatch repair MutL/HexB family.

In terms of biological role, this protein is involved in the repair of mismatches in DNA. It is required for dam-dependent methyl-directed DNA mismatch repair. May act as a 'molecular matchmaker', a protein that promotes the formation of a stable complex between two or more DNA-binding proteins in an ATP-dependent manner without itself being part of a final effector complex. This is DNA mismatch repair protein MutL from Endomicrobium trichonymphae.